Here is a 154-residue protein sequence, read N- to C-terminus: Jupiter microtubule associated homolog 1 (154 aa).

The residue at position 1 (M1) is an N-acetylmethionine. The span at 1 to 19 (MTTTTTFKGVDPNSRNSSR) shows a compositional bias: polar residues. The interval 1 to 154 (MTTTTTFKGV…PGGKSSLVLG (154 aa)) is disordered. Residue T2 is modified to N-acetylthreonine; in Hematological and neurological expressed 1 protein, N-terminally processed. Phosphoserine is present on residues S28 and S31. The span at 47–59 (MASNIFGTPEENQ) shows a compositional bias: polar residues. T54 is subject to Phosphothreonine. The span at 60–71 (ASWAKSAGAKSS) shows a compositional bias: low complexity. A phosphoserine mark is found at S71, S80, S87, S88, and S92. Polar residues predominate over residues 80-91 (SGLQRRNSSEAS). The segment covering 96-108 (LDLKGEGDIHENV) has biased composition (basic and acidic residues). The span at 125–138 (PAAPVPSPVAPAPV) shows a compositional bias: pro residues. The residue at position 131 (S131) is a Phosphoserine. K148 carries the N6-acetyllysine modification.

The protein belongs to the JUPITER family. In terms of assembly, interacts with the complex composed, at least, of APC, CTNNB1 and GSK3B; the interaction takes place with the inactive form of GSK3B (phosphorylated at 'Ser-9'). As to expression, expressed in testis, skeletal muscle, thymus, prostate, colon, peripheral blood cells, brain and placenta.

It is found in the nucleus. The protein resides in the cytoplasm. Modulates negatively AKT-mediated GSK3B signaling. Induces CTNNB1 'Ser-33' phosphorylation and degradation through the suppression of the inhibitory 'Ser-9' phosphorylation of GSK3B, which represses the function of the APC:CTNNB1:GSK3B complex and the interaction with CDH1/E-cadherin in adherent junctions. Plays a role in the regulation of cell cycle and cell adhesion. Has an inhibitory role on AR-signaling pathway through the induction of receptor proteasomal degradation. This chain is Jupiter microtubule associated homolog 1, found in Homo sapiens (Human).